The sequence spans 368 residues: Ferredoxin--NADP reductase 2 (368 aa).

Aspartate 57, glutamine 65, tyrosine 70, valine 110, phenylalanine 145, aspartate 310, and threonine 351 together coordinate FAD.

The protein belongs to the ferredoxin--NADP reductase type 2 family. In terms of assembly, homodimer. It depends on FAD as a cofactor.

It carries out the reaction 2 reduced [2Fe-2S]-[ferredoxin] + NADP(+) + H(+) = 2 oxidized [2Fe-2S]-[ferredoxin] + NADPH. The polypeptide is Ferredoxin--NADP reductase 2 (Cupriavidus pinatubonensis (strain JMP 134 / LMG 1197) (Cupriavidus necator (strain JMP 134))).